A 1393-amino-acid chain; its full sequence is DNA-directed RNA polymerase subunit beta' (1393 aa).

Cys-71, Cys-73, Cys-86, and Cys-89 together coordinate Zn(2+). Positions 462, 464, and 466 each coordinate Mg(2+). Residues Cys-811, Cys-885, Cys-892, and Cys-895 each contribute to the Zn(2+) site.

This sequence belongs to the RNA polymerase beta' chain family. The RNAP catalytic core consists of 2 alpha, 1 beta, 1 beta' and 1 omega subunit. When a sigma factor is associated with the core the holoenzyme is formed, which can initiate transcription. Mg(2+) serves as cofactor. It depends on Zn(2+) as a cofactor.

It catalyses the reaction RNA(n) + a ribonucleoside 5'-triphosphate = RNA(n+1) + diphosphate. Its function is as follows. DNA-dependent RNA polymerase catalyzes the transcription of DNA into RNA using the four ribonucleoside triphosphates as substrates. The chain is DNA-directed RNA polymerase subunit beta' from Azorhizobium caulinodans (strain ATCC 43989 / DSM 5975 / JCM 20966 / LMG 6465 / NBRC 14845 / NCIMB 13405 / ORS 571).